A 235-amino-acid polypeptide reads, in one-letter code: Enolase-phosphatase E1 (235 aa).

Belongs to the HAD-like hydrolase superfamily. MasA/MtnC family. In terms of assembly, monomer. Requires Mg(2+) as cofactor.

The catalysed reaction is 5-methylsulfanyl-2,3-dioxopentyl phosphate + H2O = 1,2-dihydroxy-5-(methylsulfanyl)pent-1-en-3-one + phosphate. The protein operates within amino-acid biosynthesis; L-methionine biosynthesis via salvage pathway; L-methionine from S-methyl-5-thio-alpha-D-ribose 1-phosphate: step 3/6. It participates in amino-acid biosynthesis; L-methionine biosynthesis via salvage pathway; L-methionine from S-methyl-5-thio-alpha-D-ribose 1-phosphate: step 4/6. Bifunctional enzyme that catalyzes the enolization of 2,3-diketo-5-methylthiopentyl-1-phosphate (DK-MTP-1-P) into the intermediate 2-hydroxy-3-keto-5-methylthiopentenyl-1-phosphate (HK-MTPenyl-1-P), which is then dephosphorylated to form the acireductone 1,2-dihydroxy-3-keto-5-methylthiopentene (DHK-MTPene). The chain is Enolase-phosphatase E1 from Gluconacetobacter diazotrophicus (strain ATCC 49037 / DSM 5601 / CCUG 37298 / CIP 103539 / LMG 7603 / PAl5).